Reading from the N-terminus, the 262-residue chain is Probable lipoprotein EnvF (262 aa).

Positions 1–25 (MNKIHVTYKNLLLPITFIAATLISA) are cleaved as a signal peptide. A lipid anchor (N-palmitoyl cysteine) is attached at cysteine 26. Cysteine 26 carries S-diacylglycerol cysteine lipidation. Positions 227–262 (EAEKAQQLVEQSRKDIESQRKKAAGKMNEIQQTFKK) are disordered. Residues 237-246 (QSRKDIESQR) show a composition bias toward basic and acidic residues.

It is found in the cell membrane. This chain is Probable lipoprotein EnvF (envF), found in Salmonella typhimurium (strain LT2 / SGSC1412 / ATCC 700720).